The sequence spans 418 residues: Probable basic-leucine zipper transcription factor E (418 aa).

Residues 8–47 adopt a coiled-coil conformation; sequence IQQIQQLHMLLQQQQQQQQQQQQQQQQQQQQLQQQNFQLT. Low complexity-rich tracts occupy residues 51–71 and 95–134; these read FQIP…NNNN and INTT…NNNT. Disordered regions lie at residues 51 to 75, 95 to 149, 165 to 196, and 211 to 252; these read FQIP…ETAF, INTT…KKQK, PTAA…TTNT, and KNQE…KNRR. The segment covering 169–179 has biased composition (basic residues); that stretch reads VKKKPPAKKSA. The span at 180–196 shows a compositional bias: low complexity; it reads KNAASQPTSPTLSTTNT. A compositionally biased stretch (acidic residues) spans 220 to 239; sequence DNSEESDSDEEDFENGDNEN. Positions 246 to 309 constitute a bZIP domain; sequence GDRKNRRLLK…QLMKDKVRYL (64 aa). Residues 248 to 268 are basic motif; sequence RKNRRLLKNREAAQLFRQRQK. The tract at residues 274–281 is leucine-zipper; that stretch reads LESKASSL. Residues 324 to 362 adopt a coiled-coil conformation; sequence SVVNQDNINNLNNNLNGLQNQQNNNNNNNNNNNNNNNNN. Residues 336–418 form a disordered region; the sequence is NNLNGLQNQQ…DSLLFNLPPD (83 aa).

It belongs to the bZIP family.

It is found in the nucleus. Functionally, probable transcriptional regulator. This Dictyostelium discoideum (Social amoeba) protein is Probable basic-leucine zipper transcription factor E (bzpE).